The primary structure comprises 870 residues: MOG interacting and ectopic P-granules protein 1 (870 aa).

The tract at residues 1–244 (MVTADETVLA…VPEEDNNEQA (244 aa)) is disordered. Residues 9–20 (LATTTNTTSMSV) show a composition bias toward polar residues. Positions 41 to 51 (EQLKAEQREVM) are enriched in basic and acidic residues. Acidic residues-rich tracts occupy residues 77–99 (EVIE…DENG), 129–142 (IEQD…EITE), and 203–214 (IELDDDDDDEIQ). 2 C2H2-type zinc fingers span residues 421–444 (HRCD…ENLH) and 450–473 (FQCT…FETH). The CCHC-type zinc finger occupies 486–508 (YPCAICEEDFNFKGVREQHYKQC). Composition is skewed to polar residues over residues 673–688 (LQAA…SQKT) and 695–708 (KLVT…VGSS). A disordered region spans residues 673–708 (LQAAVNSMRSQNSQKTPTHRSSKLVTTPSHATVGSS). 4 consecutive C2H2-type zinc fingers follow at residues 713 to 736 (FVCE…QTTH), 753 to 776 (LACS…VMSH), 794 to 815 (GRCK…VADH), and 826 to 849 (YSCD…TSNH). A disordered region spans residues 847–870 (SNHPKGDKKTSTPAKKDDCITLDD). Residues 850–870 (PKGDKKTSTPAKKDDCITLDD) show a composition bias toward basic and acidic residues.

In terms of assembly, interacts with hda-1, let-418, lin-1, mog-1, mog-4, mog-5, mog-6, pie-1 and unc-98. Post-translationally, sumoylated. Expressed in somatic cells of embryos, the head, hypodermis and tail of larvae and the germline of adults, including oocytes but not mature sperm and spermatocytes.

It localises to the nucleus. In terms of biological role, has a broad role in development, specifically in the genetic pathway SynMuvB that negatively regulates specification of the vulval cell fate. Required for fem-3 3'-UTR-mediated repression in the regulation of the sperm/oocyte switch. Acts by regulating the translation of fem-3 mRNA, by binding to its 3'-UTR. The protein is MOG interacting and ectopic P-granules protein 1 of Caenorhabditis elegans.